A 296-amino-acid polypeptide reads, in one-letter code: Acetaldehyde dehydrogenase (296 aa).

Residue 15–18 coordinates NAD(+); sequence SGNI. Catalysis depends on Cys-132, which acts as the Acyl-thioester intermediate. Residues 164–172 and Asn-274 contribute to the NAD(+) site; that span reads SAGPATRAN.

The protein belongs to the acetaldehyde dehydrogenase family. In terms of assembly, interacts with MhpE.

It catalyses the reaction acetaldehyde + NAD(+) + CoA = acetyl-CoA + NADH + H(+). It participates in aromatic compound metabolism; 3-phenylpropanoate degradation. Its function is as follows. Catalyzes the conversion of acetaldehyde to acetyl-CoA, using NAD(+) and coenzyme A. Is the final enzyme in the meta-cleavage pathway for the degradation of aromatic compounds. This Pectobacterium atrosepticum (strain SCRI 1043 / ATCC BAA-672) (Erwinia carotovora subsp. atroseptica) protein is Acetaldehyde dehydrogenase.